A 432-amino-acid polypeptide reads, in one-letter code: Glutamate-1-semialdehyde 2,1-aminomutase (432 aa).

Lys272 carries the post-translational modification N6-(pyridoxal phosphate)lysine.

It belongs to the class-III pyridoxal-phosphate-dependent aminotransferase family. HemL subfamily. Homodimer. Pyridoxal 5'-phosphate serves as cofactor.

It is found in the cytoplasm. It carries out the reaction (S)-4-amino-5-oxopentanoate = 5-aminolevulinate. The protein operates within porphyrin-containing compound metabolism; protoporphyrin-IX biosynthesis; 5-aminolevulinate from L-glutamyl-tRNA(Glu): step 2/2. It functions in the pathway porphyrin-containing compound metabolism; chlorophyll biosynthesis. This is Glutamate-1-semialdehyde 2,1-aminomutase from Picosynechococcus sp. (strain ATCC 27264 / PCC 7002 / PR-6) (Agmenellum quadruplicatum).